Consider the following 1588-residue polypeptide: Ubiquitin carboxyl-terminal hydrolase 54 (1588 aa).

An Omega-N-methylarginine modification is found at Arg-12. In terms of domain architecture, USP spans 31–352 (KGLSNEPGQN…QPLLLLYADP (322 aa)). Catalysis depends on Cys-42, which acts as the Nucleophile. 12 residues coordinate Zn(2+): His-67, Cys-69, Cys-74, Cys-77, His-133, Cys-145, Cys-150, His-153, Cys-166, Cys-169, Cys-225, and Cys-229. His-302 acts as the Proton acceptor in catalysis. Composition is skewed to basic and acidic residues over residues 382–391 (GHLTDSECNQ) and 424–434 (SEGETLKEKQA). Disordered regions lie at residues 382-519 (GHLT…PTWR), 555-577 (FTPD…RSQH), and 601-624 (ESGY…PPDS). Ser-424 is modified (phosphoserine). Positions 453–471 (TVSNMIHSRPSLASQTSAG) are enriched in polar residues. Residues 499 to 513 (TESTSSEAKSSSSSK) are compositionally biased toward low complexity. A compositionally biased stretch (basic and acidic residues) spans 555–572 (FTPDEVSKPTANDIKDGG). Residues 601–616 (ESGYESSERNSSSPVS) show a composition bias toward low complexity. Ser-613 and Ser-616 each carry phosphoserine. Residues 682 to 712 (ELDELQEEVVRRAQEQELRKKREKELEAAKG) are a coiled coil. 4 disordered regions span residues 801-834 (RSLQ…PQPT), 1089-1182 (QNTS…PDMY), 1221-1242 (SQVK…SHPR), and 1491-1561 (WGNL…RSPG). The span at 808 to 826 (QQQASSQQPVQPSASLPSQ) shows a compositional bias: low complexity. Over residues 1126–1147 (GREHCRWVKQPRSPDGRERPPC) the composition is skewed to basic and acidic residues. Ser-1138 bears the Phosphoserine mark. Polar residues predominate over residues 1510 to 1524 (PSSNLHVPLRSTWNS). Over residues 1536 to 1547 (RRIDMPPDDDWR) the composition is skewed to basic and acidic residues.

This sequence belongs to the peptidase C19 family.

The catalysed reaction is Thiol-dependent hydrolysis of ester, thioester, amide, peptide and isopeptide bonds formed by the C-terminal Gly of ubiquitin (a 76-residue protein attached to proteins as an intracellular targeting signal).. Deubiquitinase that specifically mediates 'Lys-63'-linked deubiquitination of substrates with a polyubiquitin chain composed of at least 3 ubiquitins. Specifically recognizes ubiquitin chain in position S2 and catalyzes cleavage of polyubiquitin within 'Lys-63'-linked chains. Not able to deubiquitinate substrates with shorter ubiquitin chains. Mediates deubiquitination of PLK4, maintaining PLK4 stability by reducing its ubiquitination-mediated degradation. The protein is Ubiquitin carboxyl-terminal hydrolase 54 (Usp54) of Mus musculus (Mouse).